A 413-amino-acid chain; its full sequence is Sensor protein SphS (413 aa).

The 223-residue stretch at Asp-176 to Pro-398 folds into the Histidine kinase domain. Residue His-179 is modified to Phosphohistidine; by autocatalysis.

Its subcellular location is the cytoplasm. It catalyses the reaction ATP + protein L-histidine = ADP + protein N-phospho-L-histidine.. Member of the two-component regulatory system SphR/SphS. Sensory kinase. Is involved in inducible production of alkaline phosphatase in response to phosphate limitation as it is directly involved in the regulation of phoA transcription in response to phosphate limitation. SphS functions as a protein kinase that phosphorylates SphR. This is Sensor protein SphS (sphS) from Synechococcus elongatus (strain ATCC 33912 / PCC 7942 / FACHB-805) (Anacystis nidulans R2).